The chain runs to 284 residues: 4-diphosphocytidyl-2-C-methyl-D-erythritol kinase (284 aa).

K13 is an active-site residue. 96–106 (PMGGGLGGGSS) contributes to the ATP binding site. D138 is an active-site residue.

Belongs to the GHMP kinase family. IspE subfamily.

The enzyme catalyses 4-CDP-2-C-methyl-D-erythritol + ATP = 4-CDP-2-C-methyl-D-erythritol 2-phosphate + ADP + H(+). The protein operates within isoprenoid biosynthesis; isopentenyl diphosphate biosynthesis via DXP pathway; isopentenyl diphosphate from 1-deoxy-D-xylulose 5-phosphate: step 3/6. Its function is as follows. Catalyzes the phosphorylation of the position 2 hydroxy group of 4-diphosphocytidyl-2C-methyl-D-erythritol. The polypeptide is 4-diphosphocytidyl-2-C-methyl-D-erythritol kinase (Chromobacterium violaceum (strain ATCC 12472 / DSM 30191 / JCM 1249 / CCUG 213 / NBRC 12614 / NCIMB 9131 / NCTC 9757 / MK)).